A 426-amino-acid polypeptide reads, in one-letter code: tRNA(Ile)-lysidine synthase (426 aa).

Residue 19-24 (SGGLDS) coordinates ATP.

This sequence belongs to the tRNA(Ile)-lysidine synthase family.

Its subcellular location is the cytoplasm. It carries out the reaction cytidine(34) in tRNA(Ile2) + L-lysine + ATP = lysidine(34) in tRNA(Ile2) + AMP + diphosphate + H(+). Its function is as follows. Ligates lysine onto the cytidine present at position 34 of the AUA codon-specific tRNA(Ile) that contains the anticodon CAU, in an ATP-dependent manner. Cytidine is converted to lysidine, thus changing the amino acid specificity of the tRNA from methionine to isoleucine. In Neisseria meningitidis serogroup A / serotype 4A (strain DSM 15465 / Z2491), this protein is tRNA(Ile)-lysidine synthase.